A 246-amino-acid polypeptide reads, in one-letter code: Peptide methionine sulfoxide reductase (246 aa).

The active-site Cysteine sulfenic acid (-SOH) intermediate is Cys48. Cysteines 48 and 246 form a disulfide.

In terms of processing, conjugated to URM1, a ubiquitin-like protein.

The catalysed reaction is L-methionyl-[protein] + [thioredoxin]-disulfide + H2O = L-methionyl-(S)-S-oxide-[protein] + [thioredoxin]-dithiol. The enzyme catalyses [thioredoxin]-disulfide + L-methionine + H2O = L-methionine (S)-S-oxide + [thioredoxin]-dithiol. Functionally, has an important function as a repair enzyme for proteins that have been inactivated by oxidation. Catalyzes the reduction of methionine sulfoxide in proteins to methionine. Does not catalyze the reverse reaction involving the oxidation of methionine residues. The polypeptide is Peptide methionine sulfoxide reductase (Drosophila melanogaster (Fruit fly)).